A 66-amino-acid chain; its full sequence is Large ribosomal subunit protein bL33c (66 aa).

It belongs to the bacterial ribosomal protein bL33 family.

It localises to the plastid. The protein resides in the chloroplast. The polypeptide is Large ribosomal subunit protein bL33c (Dioscorea elephantipes (Elephant's foot yam)).